Here is a 260-residue protein sequence, read N- to C-terminus: Small ribosomal subunit protein eS4 (260 aa).

The region spanning 46-111 (VPLLILVRDM…RYRVVMNEHH (66 aa)) is the S4 RNA-binding domain.

The protein belongs to the eukaryotic ribosomal protein eS4 family.

The polypeptide is Small ribosomal subunit protein eS4 (Methanopyrus kandleri (strain AV19 / DSM 6324 / JCM 9639 / NBRC 100938)).